A 102-amino-acid chain; its full sequence is Urease subunit beta (102 aa).

The protein belongs to the urease beta subunit family. As to quaternary structure, heterotrimer of UreA (gamma), UreB (beta) and UreC (alpha) subunits. Three heterotrimers associate to form the active enzyme.

The protein resides in the cytoplasm. It catalyses the reaction urea + 2 H2O + H(+) = hydrogencarbonate + 2 NH4(+). It participates in nitrogen metabolism; urea degradation; CO(2) and NH(3) from urea (urease route): step 1/1. The sequence is that of Urease subunit beta from Acinetobacter baylyi (strain ATCC 33305 / BD413 / ADP1).